Reading from the N-terminus, the 264-residue chain is Triosephosphate isomerase (264 aa).

Residue 13 to 15 (NWK) coordinates substrate. The Electrophile role is filled by H106. The Proton acceptor role is filled by E179. Residues G185, S223, and 244 to 245 (GG) contribute to the substrate site.

The protein belongs to the triosephosphate isomerase family. Homodimer.

The protein resides in the cytoplasm. It catalyses the reaction D-glyceraldehyde 3-phosphate = dihydroxyacetone phosphate. It functions in the pathway carbohydrate biosynthesis; gluconeogenesis. Its pathway is carbohydrate degradation; glycolysis; D-glyceraldehyde 3-phosphate from glycerone phosphate: step 1/1. Involved in the gluconeogenesis. Catalyzes stereospecifically the conversion of dihydroxyacetone phosphate (DHAP) to D-glyceraldehyde-3-phosphate (G3P). In Acinetobacter baumannii (strain AB0057), this protein is Triosephosphate isomerase.